We begin with the raw amino-acid sequence, 354 residues long: Uroporphyrinogen decarboxylase (354 aa).

Substrate contacts are provided by residues 27–31 (RQAGR), Asp77, Tyr153, Thr208, and His326.

The protein belongs to the uroporphyrinogen decarboxylase family. As to quaternary structure, homodimer.

The protein resides in the cytoplasm. It catalyses the reaction uroporphyrinogen III + 4 H(+) = coproporphyrinogen III + 4 CO2. It functions in the pathway porphyrin-containing compound metabolism; protoporphyrin-IX biosynthesis; coproporphyrinogen-III from 5-aminolevulinate: step 4/4. Catalyzes the decarboxylation of four acetate groups of uroporphyrinogen-III to yield coproporphyrinogen-III. The protein is Uroporphyrinogen decarboxylase of Neisseria gonorrhoeae (strain ATCC 700825 / FA 1090).